The chain runs to 387 residues: Zinc homeostasis factor 1 (387 aa).

A run of 4 helical transmembrane segments spans residues 10 to 30 (IILL…TGYA), 34 to 54 (LALI…LVAL), 77 to 97 (EILG…FIFM), and 113 to 133 (TLMF…IFLF). Positions 195 to 214 (SYTGNHNGAGTSKPVNNHGS) are enriched in polar residues. Residues 195-221 (SYTGNHNGAGTSKPVNNHGSIEQDAPK) are disordered. The next 2 membrane-spanning stretches (helical) occupy residues 234-254 (FLHV…ALFI) and 263-283 (FLFD…SAIP).

The protein belongs to the cation diffusion facilitator (CDF) transporter (TC 2.A.4) family. SLC30A subfamily.

The protein localises to the endoplasmic reticulum membrane. It is found in the nucleus membrane. Its function is as follows. Involved in zinc homeostasis, where it plays a role in its accumulation in the endoplasmic reticulum/nucleus. Also has a role in the sequestration of cadmium into the endoplasmic reticulum. In Schizosaccharomyces pombe (strain 972 / ATCC 24843) (Fission yeast), this protein is Zinc homeostasis factor 1 (zhf1).